A 713-amino-acid chain; its full sequence is Ribosomal RNA large subunit methyltransferase K/L (713 aa).

Residues 43–154 enclose the THUMP domain; the sequence is LAYRITLWTR…NGVITIAMNF (112 aa).

It belongs to the methyltransferase superfamily. RlmKL family.

Its subcellular location is the cytoplasm. The catalysed reaction is guanosine(2445) in 23S rRNA + S-adenosyl-L-methionine = N(2)-methylguanosine(2445) in 23S rRNA + S-adenosyl-L-homocysteine + H(+). The enzyme catalyses guanosine(2069) in 23S rRNA + S-adenosyl-L-methionine = N(2)-methylguanosine(2069) in 23S rRNA + S-adenosyl-L-homocysteine + H(+). Specifically methylates the guanine in position 2445 (m2G2445) and the guanine in position 2069 (m7G2069) of 23S rRNA. The chain is Ribosomal RNA large subunit methyltransferase K/L from Shewanella sp. (strain MR-4).